The sequence spans 203 residues: Glycerol-3-phosphate acyltransferase (203 aa).

4 consecutive transmembrane segments (helical) span residues 4–24 (MAVTMTIIAYLLGSISSAVLI), 80–100 (PVLLGVIAIAACLGHMYPLFF), 117–137 (PIGLDLTGMIMATWLLVAILF), and 139–159 (YSSLAALVTVLLAPMYTWMIK).

This sequence belongs to the PlsY family. As to quaternary structure, probably interacts with PlsX.

It localises to the cell inner membrane. The catalysed reaction is an acyl phosphate + sn-glycerol 3-phosphate = a 1-acyl-sn-glycero-3-phosphate + phosphate. Its pathway is lipid metabolism; phospholipid metabolism. Functionally, catalyzes the transfer of an acyl group from acyl-phosphate (acyl-PO(4)) to glycerol-3-phosphate (G3P) to form lysophosphatidic acid (LPA). This enzyme utilizes acyl-phosphate as fatty acyl donor, but not acyl-CoA or acyl-ACP. In Vibrio vulnificus (strain YJ016), this protein is Glycerol-3-phosphate acyltransferase.